Here is a 296-residue protein sequence, read N- to C-terminus: Uracil phosphoribosyltransferase, chloroplastic (296 aa).

The transit peptide at 1 to 61 directs the protein to the chloroplast; it reads MACSIGNAFR…SSSLSRRTIR (61 aa). Position 2 is an N-acetylalanine (Ala2). A GTP-binding site is contributed by 148 to 151; it reads REPI. Residues Arg158, Arg183, Asp211, 216-219, and Asp282 each bind 5-phospho-alpha-D-ribose 1-diphosphate; that span reads TGGT. Residue 281–283 coordinates uracil; it reads GDA.

It belongs to the UPRTase family. Mg(2+) is required as a cofactor.

Its subcellular location is the plastid. The protein resides in the chloroplast. It carries out the reaction UMP + diphosphate = 5-phospho-alpha-D-ribose 1-diphosphate + uracil. It functions in the pathway pyrimidine metabolism; UMP biosynthesis via salvage pathway; UMP from uracil: step 1/1. With respect to regulation, allosterically activated by GTP. Uracil phosphoribosyltransferase (UPRT) that catalyzes the conversion of uracil and 5-phospho-alpha-D-ribose 1-diphosphate (PRPP) to UMP and diphosphate. Is probably the only functional UPRT, since the dual-domain proteins of the UKL family seem to lack this activity. This chain is Uracil phosphoribosyltransferase, chloroplastic (UPP), found in Arabidopsis thaliana (Mouse-ear cress).